We begin with the raw amino-acid sequence, 230 residues long: Ribosomal RNA small subunit methyltransferase Nep1 (230 aa).

Residues Gly-184, Gly-189, and 205–210 (IYNKPL) each bind S-adenosyl-L-methionine.

The protein belongs to the class IV-like SAM-binding methyltransferase superfamily. RNA methyltransferase NEP1 family. As to quaternary structure, homodimer.

It carries out the reaction a pseudouridine in rRNA + S-adenosyl-L-methionine = an N(1)-methylpseudouridine in rRNA + S-adenosyl-L-homocysteine + H(+). Functionally, methyltransferase involved in ribosomal biogenesis. Specifically catalyzes the N1-methylation of the pseudouridine corresponding to position 914 in M.jannaschii 16S rRNA. This chain is Ribosomal RNA small subunit methyltransferase Nep1, found in Staphylothermus marinus (strain ATCC 43588 / DSM 3639 / JCM 9404 / F1).